We begin with the raw amino-acid sequence, 229 residues long: Ras-related protein rab-39 (229 aa).

Residue 73–77 (DTAGQ) participates in GTP binding. S-geranylgeranyl cysteine attachment occurs at residues Cys-227 and Cys-229. Cys-229 is modified (cysteine methyl ester).

The protein belongs to the small GTPase superfamily. Rab family. In terms of assembly, interacts (in GTP-bound form) with Ras association domain-containing protein rsf-1.

The protein resides in the cell membrane. It is found in the cytoplasmic vesicle membrane. It localises to the golgi apparatus. Small GTPases Rab involved in autophagy. The small GTPases Rab are key regulators of intracellular membrane trafficking, from the formation of transport vesicles to their fusion with membranes. Rabs cycle between an inactive GDP-bound form and an active GTP-bound form that is able to recruit to membranes different sets of downstream effectors directly responsible for vesicle formation, movement, tethering and fusion. Involved in positively regulating the oxidative stress response, perhaps in concert with the Ras association domain-containing protein rsf-1. The polypeptide is Ras-related protein rab-39 (Caenorhabditis elegans).